The chain runs to 829 residues: Cadherin-16 (829 aa).

A signal peptide spans 1–18 (MVPAWLWLLCFSVPQALV). The Extracellular segment spans residues 19–786 (EVSPTTLHVE…MKGMPTKLSA (768 aa)). Cadherin domains lie at 25–126 (LHVE…VPQF), 131–235 (YSAR…SIVE), 242–336 (EPVH…APVC), 341–449 (PPVS…APEF), 455–564 (GPVS…PPRL), and 569–665 (YEAD…APAL). 3 N-linked (GlcNAc...) asparagine glycosylation sites follow: N517, N602, and N722. The interval 666–786 (PLAPMPSRHL…MKGMPTKLSA (121 aa)) is ectodomain G. The chain crosses the membrane as a helical span at residues 787 to 807 (VGILVGTLAAIGFFLILIFTH). Over 808–829 (LALARKKDLDAPADNVPLKAAA) the chain is Cytoplasmic.

Kidney specific. Limited to the basolateral membranes of renal tubular epithelial cells.

Its subcellular location is the cell membrane. In terms of biological role, cadherins are calcium-dependent cell adhesion proteins. They preferentially interact with themselves in a homophilic manner in connecting cells; cadherins may thus contribute to the sorting of heterogeneous cell types. This Oryctolagus cuniculus (Rabbit) protein is Cadherin-16 (CDH16).